The sequence spans 500 residues: 7-alpha-hydroxycholest-4-en-3-one 12-alpha-hydroxylase (500 aa).

A helical transmembrane segment spans residues 4–24; that stretch reads WCTVLGALLTVVGCLCLSLLL. Phosphoserine is present on S325. C439 contacts heme.

It belongs to the cytochrome P450 family. Heme serves as cofactor. In terms of tissue distribution, expressed in liver.

It is found in the endoplasmic reticulum membrane. The protein resides in the microsome membrane. The enzyme catalyses 7alpha-hydroxycholest-4-en-3-one + reduced [NADPH--hemoprotein reductase] + O2 = 7alpha,12alpha-dihydroxycholest-4-en-3-one + oxidized [NADPH--hemoprotein reductase] + H2O + H(+). It carries out the reaction 5beta-cholestane-3alpha,7alpha-diol + reduced [NADPH--hemoprotein reductase] + O2 = 5beta-cholestane-3alpha,7alpha,12alpha-triol + oxidized [NADPH--hemoprotein reductase] + H2O + H(+). It catalyses the reaction chenodeoxycholate + reduced [NADPH--hemoprotein reductase] + O2 = cholate + oxidized [NADPH--hemoprotein reductase] + H2O + H(+). It functions in the pathway lipid metabolism; bile acid biosynthesis. Its function is as follows. A cytochrome P450 monooxygenase involved in primary bile acid biosynthesis. Catalyzes the 12alpha-hydroxylation of 7alpha-hydroxy-4-cholesten-3-one, an intermediate metabolite in cholic acid biosynthesis. Controls biliary balance of cholic acid and chenodeoxycholic acid, ultimately regulating the intestinal absorption of dietary lipids. Mechanistically, uses molecular oxygen inserting one oxygen atom into a substrate, and reducing the second into a water molecule, with two electrons provided by NADPH via cytochrome P450 reductase (CPR; NADPH--hemoprotein reductase). The polypeptide is 7-alpha-hydroxycholest-4-en-3-one 12-alpha-hydroxylase (Cyp8b1) (Mus musculus (Mouse)).